The chain runs to 321 residues: Sideroflexin-3 (321 aa).

An N-acetylmethionine modification is found at Met1. The next 4 membrane-spanning stretches (helical) occupy residues 146–164, 174–194, 226–246, and 266–286; these read LGTAYVSATTGAVATALGL, LVGRFVPFAAVAAANCINIPL, FQVVISRICMAIPAMAIPPLI, and LQVGLVGFCLVFATPLCCALF.

The protein belongs to the sideroflexin family.

The protein resides in the mitochondrion membrane. It catalyses the reaction L-serine(in) = L-serine(out). Its function is as follows. Mitochondrial serine transporter that mediates transport of serine into mitochondria, an important step of the one-carbon metabolism pathway. Mitochondrial serine is converted to glycine and formate, which then exits to the cytosol where it is used to generate the charged folates that serve as one-carbon donors. The protein is Sideroflexin-3 of Homo sapiens (Human).